Here is a 74-residue protein sequence, read N- to C-terminus: Major structural pilin EpdE (74 aa).

Residues 1–12 constitute a propeptide that is removed on maturation; the sequence is MKFLEKLTSKKG. Gln-13 carries the post-translational modification Pyrrolidone carboxylic acid. Positions 13–21 match the QXSXEXXXL motif; it reads QIAMELGIL.

Post-translationally, the N-terminus is cleaved by the prepilin peptidase EppA, which recognizes the class III signal sequence. In terms of processing, N-glycosylated. Glycosylated with an N-linked branched pentasaccharide glycan. May contain glycans at three sites. Glycosylation is AglB-dependent. The N-glycosylation does not occur unless the signal peptide has been cleaved first.

Its subcellular location is the secreted. It localises to the cell surface. It is found in the fimbrium. In terms of biological role, major component of the type IV-like pili. This Methanococcus maripaludis (strain DSM 14266 / JCM 13030 / NBRC 101832 / S2 / LL) protein is Major structural pilin EpdE.